A 308-amino-acid chain; its full sequence is Aspartate carbamoyltransferase catalytic subunit (308 aa).

2 residues coordinate carbamoyl phosphate: Arg57 and Thr58. Lys86 contributes to the L-aspartate binding site. 3 residues coordinate carbamoyl phosphate: Arg107, His135, and Gln138. Residues Arg168 and Arg228 each contribute to the L-aspartate site. The carbamoyl phosphate site is built by Leu267 and Pro268.

This sequence belongs to the aspartate/ornithine carbamoyltransferase superfamily. ATCase family. Heterododecamer (2C3:3R2) of six catalytic PyrB chains organized as two trimers (C3), and six regulatory PyrI chains organized as three dimers (R2).

It catalyses the reaction carbamoyl phosphate + L-aspartate = N-carbamoyl-L-aspartate + phosphate + H(+). It functions in the pathway pyrimidine metabolism; UMP biosynthesis via de novo pathway; (S)-dihydroorotate from bicarbonate: step 2/3. In terms of biological role, catalyzes the condensation of carbamoyl phosphate and aspartate to form carbamoyl aspartate and inorganic phosphate, the committed step in the de novo pyrimidine nucleotide biosynthesis pathway. The polypeptide is Aspartate carbamoyltransferase catalytic subunit (Leptospira borgpetersenii serovar Hardjo-bovis (strain JB197)).